We begin with the raw amino-acid sequence, 246 residues long: Probable site-specific recombinase in afa region (246 aa).

Residues 40–225 (ATPAYLLAPE…FALDMAATLA (186 aa)) enclose the Tyr recombinase domain. Active-site residues include Arg-75, Lys-102, His-177, Arg-180, and His-203. Residue Tyr-212 is the O-(3'-phospho-DNA)-tyrosine intermediate of the active site.

The protein belongs to the 'phage' integrase family.

This chain is Probable site-specific recombinase in afa region (int), found in Escherichia coli.